A 699-amino-acid chain; its full sequence is Elongation factor G (699 aa).

The tr-type G domain occupies 8-283; that stretch reads EHIRNIGICA…AVVYFLPSPI (276 aa). Residues 17 to 24, 81 to 85, and 135 to 138 contribute to the GTP site; these read AHIDAGKT, DTPGH, and NKMD.

This sequence belongs to the TRAFAC class translation factor GTPase superfamily. Classic translation factor GTPase family. EF-G/EF-2 subfamily.

It is found in the cytoplasm. Its function is as follows. Catalyzes the GTP-dependent ribosomal translocation step during translation elongation. During this step, the ribosome changes from the pre-translocational (PRE) to the post-translocational (POST) state as the newly formed A-site-bound peptidyl-tRNA and P-site-bound deacylated tRNA move to the P and E sites, respectively. Catalyzes the coordinated movement of the two tRNA molecules, the mRNA and conformational changes in the ribosome. The polypeptide is Elongation factor G (Rickettsia akari (strain Hartford)).